A 630-amino-acid chain; its full sequence is 1-deoxy-D-xylulose-5-phosphate synthase (630 aa).

Thiamine diphosphate contacts are provided by residues histidine 75 and 116–118 (GHS). A Mg(2+)-binding site is contributed by aspartate 147. Thiamine diphosphate contacts are provided by residues 148–149 (GA), asparagine 176, tyrosine 287, and glutamate 367. Asparagine 176 lines the Mg(2+) pocket.

Belongs to the transketolase family. DXPS subfamily. In terms of assembly, homodimer. It depends on Mg(2+) as a cofactor. Thiamine diphosphate serves as cofactor.

The catalysed reaction is D-glyceraldehyde 3-phosphate + pyruvate + H(+) = 1-deoxy-D-xylulose 5-phosphate + CO2. It participates in metabolic intermediate biosynthesis; 1-deoxy-D-xylulose 5-phosphate biosynthesis; 1-deoxy-D-xylulose 5-phosphate from D-glyceraldehyde 3-phosphate and pyruvate: step 1/1. In terms of biological role, catalyzes the acyloin condensation reaction between C atoms 2 and 3 of pyruvate and glyceraldehyde 3-phosphate to yield 1-deoxy-D-xylulose-5-phosphate (DXP). The protein is 1-deoxy-D-xylulose-5-phosphate synthase of Treponema pallidum (strain Nichols).